A 1393-amino-acid polypeptide reads, in one-letter code: Protein strawberry notch homolog 1 (1393 aa).

The segment at Ser-129–Ser-148 is disordered. At Ser-148 the chain carries Phosphoserine. N6-acetyllysine is present on Lys-149. Residues Ser-162 and Ser-214 each carry the phosphoserine modification. An N6-acetyllysine modification is found at Lys-413. Residues Ala-687–Ser-840 are disordered. Phosphoserine occurs at positions 692, 693, and 697. Basic and acidic residues predominate over residues Ser-697–Ala-716. Positions Ser-733–Tyr-747 are enriched in acidic residues. Phosphoserine occurs at positions 754, 755, and 768. The segment covering Gly-756–Asp-775 has biased composition (acidic residues). The segment covering Lys-781–Lys-793 has biased composition (basic residues). Phosphoserine is present on residues Ser-794 and Ser-815. The span at Pro-824 to Ser-840 shows a compositional bias: low complexity. The stretch at Thr-843–Pro-870 forms a coiled coil. Lys-1222 carries the post-translational modification N6-acetyllysine. Residue Ser-1386 is modified to Phosphoserine.

This sequence belongs to the SBNO family.

The protein resides in the nucleus. In terms of biological role, plays a crucial role in the regulation of neural stem cells (NSCs) proliferation. Enhances the phosphorylation of GSK3B through the PI3K-Akt signaling pathway, thereby upregulating the Wnt/beta-catenin signaling pathway and promoting the proliferation of NSCs. Improves ischemic stroke recovery while inhibiting neuroinflammation through small extracellular vesicles (sEVs)-mediated mechanism. Enhances the secretion of sEVs from NSCs, which in turn inhibit both the MAPK and NF-kappaB pathways in microglia. This inhibition suppresses the pro-inflammatory M1 polarization of microglia, promoting a shift towards the M2 anti-inflammatory phenotype, which is beneficial for reducing neuroinflammation. In Homo sapiens (Human), this protein is Protein strawberry notch homolog 1 (SBNO1).